Here is a 268-residue protein sequence, read N- to C-terminus: Tryptophan synthase alpha chain (268 aa).

Catalysis depends on proton acceptor residues glutamate 49 and aspartate 60.

It belongs to the TrpA family. As to quaternary structure, tetramer of two alpha and two beta chains.

The enzyme catalyses (1S,2R)-1-C-(indol-3-yl)glycerol 3-phosphate + L-serine = D-glyceraldehyde 3-phosphate + L-tryptophan + H2O. Its pathway is amino-acid biosynthesis; L-tryptophan biosynthesis; L-tryptophan from chorismate: step 5/5. In terms of biological role, the alpha subunit is responsible for the aldol cleavage of indoleglycerol phosphate to indole and glyceraldehyde 3-phosphate. This is Tryptophan synthase alpha chain from Haemophilus influenzae (strain ATCC 51907 / DSM 11121 / KW20 / Rd).